Consider the following 769-residue polypeptide: MDIGKKHVIPKSQYRRKRREFFHNEDREENLNQHQDKQNIDNTTSKKADKQIHKDSIDKHERFKNSLSSHLEQRNRDVNENKAEESKSNQDSKSAYNRDHYLTDDVSKKQNSLDSVDQDTVKSKYYEQNSEATLSTKSTDKVESTEMRKLSSDKNKVGHEEQHVLSKPSEHDKETRIDSESSRTDSDSSMQTEKIKKDSSDGNKSSNLKSEVISDKSNTVPKLSESDDEVNNQKPLTLPEEQKLKRQQSQNEQTKTYTYGDSEQNDKSNHENDLSHHIPSISDDKDNVMRENHIVDDNPDNDINTPSLSKTDDDRKLDEKIHVEDKHKQNADSSETVGYQSQSTASHRSTEKRNISINDHDKLNGQKTNTKTSANNNQKKATSKLNKGRATNNNYSDILKKFWMMYWPKLVILMGIIILIVILNAIFNNVNKNDRMNDNNDADAQKYTTTMKNANNTVKSVVTVENETSKDSSLPKDKASQDEVGSGVVYKKSGDTLYIVTNAHVVGDKENQKITFSNNKSVVGKVLGKDKWSDLAVVKATSSDSSVKEIAIGDSNNLVLGEPILVVGNPLGVDFKGTVTEGIISGLNRNVPIDFDKDNKYDMLMKAFQIDASVNPGNSGGAVVNREGKLIGVVAAKISMPNVENMSFAIPVNEVQKIVKDLETKGKIDYPDVGVKMKNIASLNSFERQAVKLPGKVKNGVVVDQVDNNGLADQSGLKKGDVITELDGKLLEDDLRFRQIIFSHKDDLKSITAKIYRDGKEKEINIKLK.

Basic residues predominate over residues 1–20; it reads MDIGKKHVIPKSQYRRKRRE. A disordered region spans residues 1 to 390; the sequence is MDIGKKHVIP…ATSKLNKGRA (390 aa). Basic and acidic residues-rich tracts occupy residues 21–64 and 71–108; these read FFHN…ERFK and LEQRNRDVNENKAEESKSNQDSKSAYNRDHYLTDDVSK. Residues 126-137 show a composition bias toward polar residues; that stretch reads YEQNSEATLSTK. Residues 138 to 186 show a composition bias toward basic and acidic residues; the sequence is STDKVESTEMRKLSSDKNKVGHEEQHVLSKPSEHDKETRIDSESSRTDS. Residues 247-262 are compositionally biased toward polar residues; the sequence is QQSQNEQTKTYTYGDS. Composition is skewed to basic and acidic residues over residues 264-296 and 310-330; these read QNDKSNHENDLSHHIPSISDDKDNVMRENHIVD and KTDDDRKLDEKIHVEDKHKQN. The segment covering 331 to 347 has biased composition (polar residues); it reads ADSSETVGYQSQSTASH. Basic and acidic residues predominate over residues 348–364; sequence RSTEKRNISINDHDKLN. Positions 365-390 are enriched in polar residues; that stretch reads GQKTNTKTSANNNQKKATSKLNKGRA. The chain crosses the membrane as a helical span at residues 410–430; the sequence is LVILMGIIILIVILNAIFNNV. Catalysis depends on charge relay system residues His504, Asp534, and Ser619. A PDZ domain is found at 680 to 733; the sequence is IASLNSFERQAVKLPGKVKNGVVVDQVDNNGLADQSGLKKGDVITELDGKLLED.

This sequence belongs to the peptidase S1C family.

The protein localises to the cell membrane. The polypeptide is Serine protease HtrA-like (Staphylococcus aureus (strain USA300)).